The following is a 153-amino-acid chain: Transcriptional regulator MraZ (153 aa).

2 consecutive SpoVT-AbrB domains span residues 7–61 and 90–133; these read KEKH…LPDV and LEMV…EPGR.

It belongs to the MraZ family. As to quaternary structure, forms oligomers.

It is found in the cytoplasm. The protein resides in the nucleoid. This Chlorobium luteolum (strain DSM 273 / BCRC 81028 / 2530) (Pelodictyon luteolum) protein is Transcriptional regulator MraZ.